We begin with the raw amino-acid sequence, 465 residues long: Cysteine--tRNA ligase (465 aa).

C27 contributes to the Zn(2+) binding site. The short motif at 29-39 is the 'HIGH' region element; it reads PTVYNFFHIGN. Residues C207, H232, and E236 each contribute to the Zn(2+) site. The short motif at 264 to 268 is the 'KMSKS' region element; that stretch reads KMSKS. Position 267 (K267) interacts with ATP.

Belongs to the class-I aminoacyl-tRNA synthetase family. In terms of assembly, monomer. Zn(2+) is required as a cofactor.

Its subcellular location is the cytoplasm. The catalysed reaction is tRNA(Cys) + L-cysteine + ATP = L-cysteinyl-tRNA(Cys) + AMP + diphosphate. The polypeptide is Cysteine--tRNA ligase (Clostridium botulinum (strain Loch Maree / Type A3)).